The sequence spans 389 residues: Tryptophan 2,3-dioxygenase (389 aa).

Substrate is bound by residues 60-64 (FIITH) and Arg131. His316 is a heme binding site. A substrate-binding site is contributed by Thr331.

Belongs to the tryptophan 2,3-dioxygenase family. In terms of assembly, homotetramer. Dimer of dimers. Requires heme as cofactor.

The enzyme catalyses L-tryptophan + O2 = N-formyl-L-kynurenine. Its pathway is amino-acid degradation; L-tryptophan degradation via kynurenine pathway; L-kynurenine from L-tryptophan: step 1/2. The protein operates within pigment biosynthesis; ommochrome biosynthesis. Heme-dependent dioxygenase that catalyzes the oxidative cleavage of the L-tryptophan (L-Trp) pyrrole ring and converts L-tryptophan to N-formyl-L-kynurenine. Catalyzes the oxidative cleavage of the indole moiety. The protein is Tryptophan 2,3-dioxygenase of Mayetiola destructor (Hessian fly).